Consider the following 311-residue polypeptide: Aspartate carbamoyltransferase catalytic subunit (311 aa).

2 residues coordinate carbamoyl phosphate: Arg-55 and Thr-56. Lys-85 provides a ligand contact to L-aspartate. Residues Arg-106, His-135, and Gln-138 each contribute to the carbamoyl phosphate site. L-aspartate is bound by residues Arg-168 and Arg-230. Leu-268 and Pro-269 together coordinate carbamoyl phosphate.

The protein belongs to the aspartate/ornithine carbamoyltransferase superfamily. ATCase family. Heterododecamer (2C3:3R2) of six catalytic PyrB chains organized as two trimers (C3), and six regulatory PyrI chains organized as three dimers (R2).

It catalyses the reaction carbamoyl phosphate + L-aspartate = N-carbamoyl-L-aspartate + phosphate + H(+). It participates in pyrimidine metabolism; UMP biosynthesis via de novo pathway; (S)-dihydroorotate from bicarbonate: step 2/3. In terms of biological role, catalyzes the condensation of carbamoyl phosphate and aspartate to form carbamoyl aspartate and inorganic phosphate, the committed step in the de novo pyrimidine nucleotide biosynthesis pathway. The chain is Aspartate carbamoyltransferase catalytic subunit from Salmonella paratyphi C (strain RKS4594).